The primary structure comprises 479 residues: Adenylate kinase 8 (479 aa).

2 adenylate kinase regions span residues 58-258 (PRIV…TYVQ) and 269-471 (PRVL…SGII). Residue 67–72 (ASGKTT) coordinates ATP. Residues 87–113 (TLENLILNEFSYTATEARRLYLQRKTV) are NMP 1. AMP is bound by residues 140 to 143 (GIPE), glutamine 147, and arginine 203. Residues 177–206 (GKRIDPQTGEIYHTTFDWPPESEIQNRLMV) form an LID 1 region. ATP is bound at residue 278 to 283 (GSGKSL). Positions 298–327 (CCGQLLKEAVADRTTFGELIQPFFEKEMAV) are NMP 2. AMP is bound by residues 325–327 (MAV), 354–357 (GVPR), and glutamine 361. The segment at 391–424 (LRRIDPVTGERYHLMYKPPPTMEIQARLLQNPKD) is LID 2. Arginine 392 is an ATP binding site.

The protein belongs to the adenylate kinase family. As to quaternary structure, interacts with CFAP45 and CFAP52; CFAP45 and AK8 dimerization may create a cavity at the interface of the dimer that can accommodate AMP. Expressed in respiratory cells (at protein level).

Its subcellular location is the cytoplasm. The protein resides in the cytosol. The protein localises to the cytoskeleton. It localises to the cilium axoneme. It carries out the reaction AMP + ATP = 2 ADP. It catalyses the reaction a 2'-deoxyribonucleoside 5'-diphosphate + ATP = a 2'-deoxyribonucleoside 5'-triphosphate + ADP. The catalysed reaction is a ribonucleoside 5'-diphosphate + ATP = a ribonucleoside 5'-triphosphate + ADP. Its function is as follows. Nucleoside monophosphate (NMP) kinase that catalyzes the reversible transfer of the terminal phosphate group between nucleoside triphosphates and monophosphates. Has highest activity toward AMP, and weaker activity toward dAMP, CMP and dCMP. Also displays broad nucleoside diphosphate kinase activity. The chain is Adenylate kinase 8 (AK8) from Homo sapiens (Human).